Reading from the N-terminus, the 468-residue chain is 3-isopropylmalate dehydratase large subunit (468 aa).

The [4Fe-4S] cluster site is built by cysteine 349, cysteine 409, and cysteine 412.

The protein belongs to the aconitase/IPM isomerase family. LeuC type 1 subfamily. Heterodimer of LeuC and LeuD. Requires [4Fe-4S] cluster as cofactor.

It catalyses the reaction (2R,3S)-3-isopropylmalate = (2S)-2-isopropylmalate. It functions in the pathway amino-acid biosynthesis; L-leucine biosynthesis; L-leucine from 3-methyl-2-oxobutanoate: step 2/4. Catalyzes the isomerization between 2-isopropylmalate and 3-isopropylmalate, via the formation of 2-isopropylmaleate. The sequence is that of 3-isopropylmalate dehydratase large subunit from Ruegeria pomeroyi (strain ATCC 700808 / DSM 15171 / DSS-3) (Silicibacter pomeroyi).